The primary structure comprises 334 residues: Ribosomal RNA small subunit methyltransferase H (334 aa).

S-adenosyl-L-methionine is bound by residues 53–55 (GGH), aspartate 72, phenylalanine 99, aspartate 122, and histidine 129.

It belongs to the methyltransferase superfamily. RsmH family.

Its subcellular location is the cytoplasm. It carries out the reaction cytidine(1402) in 16S rRNA + S-adenosyl-L-methionine = N(4)-methylcytidine(1402) in 16S rRNA + S-adenosyl-L-homocysteine + H(+). Its function is as follows. Specifically methylates the N4 position of cytidine in position 1402 (C1402) of 16S rRNA. The protein is Ribosomal RNA small subunit methyltransferase H of Leptospira interrogans serogroup Icterohaemorrhagiae serovar Lai (strain 56601).